The primary structure comprises 61 residues: Large ribosomal subunit protein uL30 (61 aa).

The protein belongs to the universal ribosomal protein uL30 family. As to quaternary structure, part of the 50S ribosomal subunit.

In Chlorobium luteolum (strain DSM 273 / BCRC 81028 / 2530) (Pelodictyon luteolum), this protein is Large ribosomal subunit protein uL30.